A 359-amino-acid polypeptide reads, in one-letter code: Bergaptol O-methyltransferase (359 aa).

H126 is a binding site for bergaptol. S-adenosyl-L-homocysteine-binding residues include S179, G203, D226, D246, and K260. Residue H264 participates in bergaptol binding. H264 (proton acceptor) is an active-site residue.

Belongs to the class I-like SAM-binding methyltransferase superfamily. Cation-independent O-methyltransferase family. COMT subfamily. Homodimer. In terms of tissue distribution, mostly expressed in roots and, to a lower extent, in stems and leaves.

Its subcellular location is the cytoplasm. The enzyme catalyses bergaptol + S-adenosyl-L-methionine = bergapten + S-adenosyl-L-homocysteine. It participates in aromatic compound metabolism. Its pathway is secondary metabolite biosynthesis. O-methyltransferase involved in the biosynthesis of furocoumarins natural products such as bergapten, a photosensitizer used for medical purpose such as treating psoriasis and vitiligo or facilitating resistance to microbial infection and other stresses. Catalyzes specifically the methylation of bergaptol. Not active on xanthotol, isoscopoletin, scopoletin and esculetin. The sequence is that of Bergaptol O-methyltransferase from Kitagawia praeruptora (Peucedanum praeruptorum).